We begin with the raw amino-acid sequence, 234 residues long: 2-amino-5-formylamino-6-ribosylaminopyrimidin-4(3H)-one 5'-monophosphate deformylase (234 aa).

4 residues coordinate Fe cation: E29, H31, D40, and H109.

It belongs to the creatininase superfamily. FAPy deformylase family. As to quaternary structure, homodimer. Requires Fe(2+) as cofactor. Zn(2+) serves as cofactor.

It catalyses the reaction 2-amino-5-formylamino-6-(5-phospho-D-ribosylamino)pyrimidin-4(3H)-one + H2O = 2,5-diamino-6-(1-D-ribosylamino)pyrimidin-4(3H)-one 5'-phosphate + formate + H(+). Its pathway is cofactor biosynthesis; coenzyme F420 biosynthesis. It functions in the pathway cofactor biosynthesis; riboflavin biosynthesis. Functionally, catalyzes the hydrolysis of the formamide of 2-amino-5-formylamino-6-ribosylamino-4(3H)-pyrimidinone 5'-monophosphate (FAPy) to form 2,5-diamino-6-ribosylamino-4(3H)-pyrimidinone 5'-phosphate (APy). The polypeptide is 2-amino-5-formylamino-6-ribosylaminopyrimidin-4(3H)-one 5'-monophosphate deformylase (Methanobrevibacter ruminantium (strain ATCC 35063 / DSM 1093 / JCM 13430 / OCM 146 / M1) (Methanobacterium ruminantium)).